Here is a 362-residue protein sequence, read N- to C-terminus: Poly(rC)-binding protein 2 (362 aa).

2 consecutive KH domains span residues 13-75 and 97-162; these read TLTI…FAMI and PVTL…VKQI. K115 participates in a covalent cross-link: Glycyl lysine isopeptide (Lys-Gly) (interchain with G-Cter in SUMO2). A Phosphoserine modification is found at S169. A Glycyl lysine isopeptide (Lys-Gly) (interchain with G-Cter in SUMO2) cross-link involves residue K181. 2 positions are modified to phosphoserine: S185 and S268. One can recognise a KH 3 domain in the interval 284 to 348; that stretch reads TTSHELTIPN…ASISLAQYLI (65 aa). K319 is covalently cross-linked (Glycyl lysine isopeptide (Lys-Gly) (interchain with G-Cter in SUMO2)). 2 positions are modified to phosphoserine: S361 and S362.

As to quaternary structure, identified in a mRNP complex, at least composed of DHX9, DDX3X, ELAVL1, HNRNPU, IGF2BP1, ILF3, PABPC1, PCBP2, PTBP2, STAU1, STAU2, SYNCRIP and YBX1. Interacts with IFIH1 and RNF135. Interacts with MAVS (via C-terminus) and ITCH (via WW domains). Interacts with CGAS; preventing the formation of liquid-like droplets in which CGAS is activated. In terms of processing, phosphorylated. The non-phosphorylated form(s) exhibited the strongest poly(rC)-binding activity.

The protein resides in the nucleus. Its subcellular location is the cytoplasm. Single-stranded nucleic acid binding protein that binds preferentially to oligo dC. Major cellular poly(rC)-binding protein. Also binds poly(rU). Acts as a negative regulator of antiviral signaling. Negatively regulates cellular antiviral responses mediated by MAVS signaling. It acts as an adapter between MAVS and the E3 ubiquitin ligase ITCH, therefore triggering MAVS ubiquitination and degradation. Negativeley regulates the cGAS-STING pathway via interaction with CGAS, preventing the formation of liquid-like droplets in which CGAS is activated. Together with PCBP1, required for erythropoiesis, possibly by regulating mRNA splicing. This Mus musculus (Mouse) protein is Poly(rC)-binding protein 2 (Pcbp2).